The sequence spans 123 residues: Small ribosomal subunit protein uS12 (123 aa).

Asp-89 is modified (3-methylthioaspartic acid).

Belongs to the universal ribosomal protein uS12 family. As to quaternary structure, part of the 30S ribosomal subunit. Contacts proteins S8 and S17. May interact with IF1 in the 30S initiation complex.

Functionally, with S4 and S5 plays an important role in translational accuracy. Its function is as follows. Interacts with and stabilizes bases of the 16S rRNA that are involved in tRNA selection in the A site and with the mRNA backbone. Located at the interface of the 30S and 50S subunits, it traverses the body of the 30S subunit contacting proteins on the other side and probably holding the rRNA structure together. The combined cluster of proteins S8, S12 and S17 appears to hold together the shoulder and platform of the 30S subunit. The chain is Small ribosomal subunit protein uS12 from Rhizobium etli (strain ATCC 51251 / DSM 11541 / JCM 21823 / NBRC 15573 / CFN 42).